The primary structure comprises 174 residues: Nicotinamide-nucleotide adenylyltransferase (174 aa).

Belongs to the archaeal NMN adenylyltransferase family.

It localises to the cytoplasm. It carries out the reaction beta-nicotinamide D-ribonucleotide + ATP + H(+) = diphosphate + NAD(+). The protein operates within cofactor biosynthesis; NAD(+) biosynthesis; NAD(+) from nicotinamide D-ribonucleotide: step 1/1. This chain is Nicotinamide-nucleotide adenylyltransferase, found in Methanospirillum hungatei JF-1 (strain ATCC 27890 / DSM 864 / NBRC 100397 / JF-1).